The sequence spans 536 residues: Quinate permease (536 aa).

Topologically, residues 1-26 (MTLLALKEDRPTPKAVYNWRVYTCAA) are cytoplasmic. Residues 27–47 (IASFASCMIGYDSSFIGTTLA) traverse the membrane as a helical segment. Residues 48 to 74 (LPSFTKEFDFASYTPGALALLQSNIVS) are Extracellular-facing. The helical transmembrane segment at 75 to 95 (VYQAGAFFGSLFAFATSYFLG) threads the bilayer. Over 96-98 (RRR) the chain is Cytoplasmic. A helical transmembrane segment spans residues 99–119 (SLIAFSVVFIIGAAIMLAADG). Topologically, residues 120–131 (QRRGVDPIIAGR) are extracellular. Residues 132-152 (VLAGIGVGGASNMVPIYISEL) traverse the membrane as a helical segment. The Cytoplasmic segment spans residues 153–160 (APPAVRGR). Residues 161 to 181 (LVGIYELGWQIGGLVGFWINY) form a helical membrane-spanning segment. At 182–195 (GVNTTMAPTRSQWL) the chain is on the extracellular side. N-linked (GlcNAc...) asparagine glycosylation occurs at asparagine 184. Residues 196-216 (IPFAVQLIPAGLLFLGSFWIP) form a helical membrane-spanning segment. Topologically, residues 217–285 (ESPRWLFANG…SLKQPKVRWR (69 aa)) are cytoplasmic. The helical transmembrane segment at 286-306 (FFLGGMLFLWQNGSGINAINY) threads the bilayer. At 307–327 (YSPTVFRSIGITGTNTGFLTT) the chain is on the extracellular side. A helical membrane pass occupies residues 328-349 (GIFGVVKMVLTIIWLLWLVDLV). The Cytoplasmic segment spans residues 350–352 (GRR). A helical membrane pass occupies residues 353-373 (RILFVGATGGSLCMWFIGAYI). Residues 374-389 (KIAGPGTTKTEEAKLT) are Extracellular-facing. Residues 390-410 (SGGIAAIFFFYLWTAFYTPSW) form a helical membrane-spanning segment. At 411 to 435 (NGTPWVINSEMFDQNTRSLGQASAA) the chain is on the cytoplasmic side. The helical transmembrane segment at 436 to 456 (ANNWFWNFIISRFTPQMFIKM) threads the bilayer. The Extracellular portion of the chain corresponds to 457 to 458 (EY). Residues 459–479 (GVYFFFASLMLLSVVFIYFFI) traverse the membrane as a helical segment. Residues 480-536 (PETKSIPLEAMDRLFAIKSVHNANKILMDELNFDRNPEREQSSLDEKDRVTQTENAV) lie on the Cytoplasmic side of the membrane. The span at 516 to 530 (PEREQSSLDEKDRVT) shows a compositional bias: basic and acidic residues. A disordered region spans residues 516-536 (PEREQSSLDEKDRVTQTENAV).

It belongs to the major facilitator superfamily. Sugar transporter (TC 2.A.1.1) family.

It is found in the membrane. The chain is Quinate permease (qa-y) from Neurospora africana.